A 354-amino-acid chain; its full sequence is Galactose-1-phosphate uridylyltransferase (354 aa).

The interval 36-72 (TVTTSEVRRDPLLGDSAPSRLAPQGRTYHPPADQCPL) is disordered. Cysteine 70, cysteine 73, and histidine 114 together coordinate Zn(2+). Asparagine 154 is a binding site for UDP-alpha-D-glucose. Residue histidine 165 coordinates Zn(2+). Histidine 167 serves as the catalytic Tele-UMP-histidine intermediate. UDP-alpha-D-glucose is bound by residues glutamine 169 and glutamine 332.

It belongs to the galactose-1-phosphate uridylyltransferase type 1 family. Zn(2+) is required as a cofactor.

The enzyme catalyses alpha-D-galactose 1-phosphate + UDP-alpha-D-glucose = alpha-D-glucose 1-phosphate + UDP-alpha-D-galactose. It functions in the pathway carbohydrate metabolism; galactose metabolism. In Streptomyces lividans, this protein is Galactose-1-phosphate uridylyltransferase (galT).